We begin with the raw amino-acid sequence, 227 residues long: E3 ubiquitin-protein ligase ZNRF1 (227 aa).

A disordered region spans residues 1 to 42 (MGGKQSTAARSRGPFPGVSTDDSAVPPPGGAPHFGHYRTGGG). Gly-2 carries N-myristoyl glycine lipidation. Positions 2–10 (GGKQSTAAR) are required for endosomal and lysosomal localization and myristoylation. 3 positions are modified to phosphoserine: Ser-50, Ser-52, and Ser-53. A disordered region spans residues 65 to 105 (GGVPFSLYTPASRGTGDSERAPGGGGSTSDSTYAHGNGYQE). Residue Tyr-103 is modified to Phosphotyrosine. Position 123 is a phosphoserine (Ser-123). Residues 184 to 225 (CVICLEELLQGDTIARLPCLCIYHKSCIDSWFEVNRSCPEHP) form an RING-type; atypical zinc finger.

Interacts with AKT1, GLUL and TUBB2A. Interacts with ZNRF2. Interacts (via its RING domain) with UBE2N. Interacts (when phosphorylated) with YWHAE. N-myristoylation targets ZNRF1 to intracellular membranes. In terms of processing, phosphorylated by SRC at Tyr-103; leading to 'Lys-63'-linked ubiquitination of TLR3, lysosomal trafficking and degradation.

The protein localises to the endosome. The protein resides in the lysosome. It is found in the membrane. It localises to the cytoplasmic vesicle. Its subcellular location is the secretory vesicle. The protein localises to the synaptic vesicle membrane. The enzyme catalyses S-ubiquitinyl-[E2 ubiquitin-conjugating enzyme]-L-cysteine + [acceptor protein]-L-lysine = [E2 ubiquitin-conjugating enzyme]-L-cysteine + N(6)-ubiquitinyl-[acceptor protein]-L-lysine.. Its pathway is protein modification; protein ubiquitination. In terms of biological role, E3 ubiquitin-protein ligase that plays a role in different processes including cell differentiation, receptor recycling or regulation of inflammation. Mediates the ubiquitination of AKT1 and GLUL, thereby playing a role in neuron cells differentiation. Plays a role in the establishment and maintenance of neuronal transmission and plasticity. Regulates Schwann cells differentiation by mediating ubiquitination of GLUL. Promotes neurodegeneration by mediating 'Lys-48'-linked polyubiquitination and subsequent degradation of AKT1 in axons: degradation of AKT1 prevents AKT1-mediated phosphorylation of GSK3B, leading to GSK3B activation and phosphorylation of DPYSL2/CRMP2 followed by destabilization of microtubule assembly in axons. Ubiquitinates the Na(+)/K(+) ATPase alpha-1 subunit/ATP1A1 and thereby influences its endocytosis and/or degradation. Controls ligand-induced EGFR signaling via mediating receptor ubiquitination and recruitment of the ESCRT machinery. Acts as a negative feedback mechanism controlling TLR3 trafficking by mediating TLR3 'Lys-63'-linked polyubiquitination to reduce type I IFN production. Modulates inflammation by promoting caveolin-1/CAV1 ubiquitination and degradation to regulate TLR4-activated immune response. In Mus musculus (Mouse), this protein is E3 ubiquitin-protein ligase ZNRF1 (Znrf1).